The sequence spans 540 residues: Collagen alpha-1(XXIII) chain (540 aa).

A compositionally biased stretch (gly residues) spans 1-26 (MGPGERAGGGGDAGKGNAAGGGGGGR). The disordered stretch occupies residues 1–28 (MGPGERAGGGGDAGKGNAAGGGGGGRSA). Over 1–34 (MGPGERAGGGGDAGKGNAAGGGGGGRSATTAGSR) the chain is Cytoplasmic. A helical; Signal-anchor for type II membrane protein transmembrane segment spans residues 35 to 56 (AVSALCLLLSVGSAAACLLLGV). At 57-540 (QAAALQGRVA…GLPVPGCWHK (484 aa)) the chain is on the extracellular side. Disordered regions lie at residues 109–304 (AREA…GEQG) and 316–540 (LDAL…CWHK). Collagen-like domains follow at residues 124-243 (GRRG…PGKK), 251-305 (QPGP…EQGD), 321-380 (GPPG…MGLS), 412-460 (GPPG…GPPG), and 463-522 (GLPG…PGLD). 2 stretches are compositionally biased toward low complexity: residues 140-156 (QSGR…DGKP) and 168-183 (PGDF…DGAA). A compositionally biased stretch (pro residues) spans 185–195 (PPGPPGPPGAR). Residues 322–334 (PPGPQGPPGPPGI) show a composition bias toward pro residues. Basic and acidic residues predominate over residues 350 to 362 (DGEKGPKGQKGDP). Residues 411-422 (PGPPGPPGPPGP) show a composition bias toward pro residues. 2 stretches are compositionally biased toward basic and acidic residues: residues 435 to 444 (DGAKGEKGAS) and 486 to 503 (RGEK…ERGV).

Homotrimer. Post-translationally, undergoes proteolytic cleavage by furin protease to yield a 60 kDa soluble form that forms a homotrimer and exhibits a low affinity interaction with heparin.

The protein localises to the cell membrane. The polypeptide is Collagen alpha-1(XXIII) chain (COL23A1) (Homo sapiens (Human)).